Here is a 275-residue protein sequence, read N- to C-terminus: Large ribosomal subunit protein uL2 (275 aa).

Residues 221–275 (RGSAMTPRDHPHGGGEGKAPRGMPPKTPWGKPALGKRTRRNKKSDRFIIRRRYEA) are disordered. A compositionally biased stretch (basic and acidic residues) spans 227–239 (PRDHPHGGGEGKA). The segment covering 254-263 (LGKRTRRNKK) has biased composition (basic residues). Basic and acidic residues predominate over residues 264–275 (SDRFIIRRRYEA).

The protein belongs to the universal ribosomal protein uL2 family. In terms of assembly, part of the 50S ribosomal subunit. Forms a bridge to the 30S subunit in the 70S ribosome.

Its function is as follows. One of the primary rRNA binding proteins. Required for association of the 30S and 50S subunits to form the 70S ribosome, for tRNA binding and peptide bond formation. It has been suggested to have peptidyltransferase activity; this is somewhat controversial. Makes several contacts with the 16S rRNA in the 70S ribosome. In Thermomicrobium roseum (strain ATCC 27502 / DSM 5159 / P-2), this protein is Large ribosomal subunit protein uL2.